The sequence spans 793 residues: Ankyrin repeat domain-containing protein SOWAHB (793 aa).

4 disordered regions span residues 83 to 185 (EEGL…QARA), 219 to 290 (ATAE…ELLT), 337 to 360 (QLPL…SSHS), and 396 to 543 (DFVD…SPRV). Low complexity-rich tracts occupy residues 96 to 108 (APSA…CSPR), 134 to 144 (AGAAARAADAA), and 175 to 185 (AAAAAGAQARA). Ser-106 bears the Phosphoserine mark. Over residues 220–244 (TAEEKPARALPAQDDRGASREREEG) the composition is skewed to basic and acidic residues. Low complexity predominate over residues 246–273 (LAEPAPVPAVAHSPPATVEAATSRASPP). Position 271 is a phosphoserine (Ser-271). Positions 396–406 (DFVDQESDGSE) are enriched in acidic residues. Composition is skewed to low complexity over residues 407-417 (ESSSGPKDSPG) and 498-508 (RSSLAGRAKLS). Positions 521–533 (KRSRRPPRSRKPS) are enriched in basic residues. 2 ANK repeats span residues 630 to 659 (TGYT…KAGI) and 669 to 699 (CGYT…RVNV). Ser-761 carries the phosphoserine modification.

This sequence belongs to the SOWAH family.

The polypeptide is Ankyrin repeat domain-containing protein SOWAHB (SOWAHB) (Homo sapiens (Human)).